The chain runs to 324 residues: Probable cell division protein WhiA (324 aa).

A DNA-binding region (H-T-H motif) is located at residues 275-308; the sequence is SLEELGALADPPLTKDAIAGRIRRLIAMADRRAD.

Belongs to the WhiA family.

In terms of biological role, involved in cell division and chromosome segregation. This Acidothermus cellulolyticus (strain ATCC 43068 / DSM 8971 / 11B) protein is Probable cell division protein WhiA.